Reading from the N-terminus, the 362-residue chain is MQYRPALSKMKPYVPGEQPPPGKFIKLNTNENPYPPPAPVVSAIQSAATGPLNRYPDPMATSFRRAAANALGLPGPEWVLAGNGSDEILTLLVRGFVGEGESLRLPYPSYILYRTLADIQGANWEQVPFNDPWELPQSFGENREDLKLVLLPNPNSPSGTIVSKPQIAELSNSLNCPLVVDEAYADFAEENCLDLVQSDENIFVTRTLSKSYGLAGIRFGFLVAQPHVIAELTKIKDSYNCDAISIAAATAAMGCQEWLADVVAKMNVTRDRTTDRLRALGFDVTPSHANFVWCRHPEGKHAEIHQYLKQSQILIRYMDFPDWGDGLRISVGTDDQIDACMLMIERAMQSLNISLPARADST.

At Lys210 the chain carries N6-(pyridoxal phosphate)lysine.

It belongs to the class-II pyridoxal-phosphate-dependent aminotransferase family. Histidinol-phosphate aminotransferase subfamily. Homodimer. Pyridoxal 5'-phosphate is required as a cofactor.

It catalyses the reaction L-histidinol phosphate + 2-oxoglutarate = 3-(imidazol-4-yl)-2-oxopropyl phosphate + L-glutamate. It participates in amino-acid biosynthesis; L-histidine biosynthesis; L-histidine from 5-phospho-alpha-D-ribose 1-diphosphate: step 7/9. This chain is Histidinol-phosphate aminotransferase, found in Rhodopirellula baltica (strain DSM 10527 / NCIMB 13988 / SH1).